The following is a 304-amino-acid chain: Porphobilinogen deaminase (304 aa).

At C240 the chain carries S-(dipyrrolylmethanemethyl)cysteine.

The protein belongs to the HMBS family. In terms of assembly, monomer. Dipyrromethane serves as cofactor.

It carries out the reaction 4 porphobilinogen + H2O = hydroxymethylbilane + 4 NH4(+). Its pathway is porphyrin-containing compound metabolism; protoporphyrin-IX biosynthesis; coproporphyrinogen-III from 5-aminolevulinate: step 2/4. Functionally, tetrapolymerization of the monopyrrole PBG into the hydroxymethylbilane pre-uroporphyrinogen in several discrete steps. The protein is Porphobilinogen deaminase of Xanthomonas axonopodis pv. citri (strain 306).